The sequence spans 213 residues: Phosphoribosylformylglycinamidine synthase subunit PurQ (213 aa).

A Glutamine amidotransferase type-1 domain is found at 5–213 (ACVVVYPGSN…FQSILNYLKR (209 aa)). Cysteine 86 functions as the Nucleophile in the catalytic mechanism. Active-site residues include histidine 186 and glutamate 188.

Part of the FGAM synthase complex composed of 1 PurL, 1 PurQ and 2 PurS subunits.

The protein resides in the cytoplasm. It catalyses the reaction N(2)-formyl-N(1)-(5-phospho-beta-D-ribosyl)glycinamide + L-glutamine + ATP + H2O = 2-formamido-N(1)-(5-O-phospho-beta-D-ribosyl)acetamidine + L-glutamate + ADP + phosphate + H(+). It carries out the reaction L-glutamine + H2O = L-glutamate + NH4(+). It participates in purine metabolism; IMP biosynthesis via de novo pathway; 5-amino-1-(5-phospho-D-ribosyl)imidazole from N(2)-formyl-N(1)-(5-phospho-D-ribosyl)glycinamide: step 1/2. In terms of biological role, part of the phosphoribosylformylglycinamidine synthase complex involved in the purines biosynthetic pathway. Catalyzes the ATP-dependent conversion of formylglycinamide ribonucleotide (FGAR) and glutamine to yield formylglycinamidine ribonucleotide (FGAM) and glutamate. The FGAM synthase complex is composed of three subunits. PurQ produces an ammonia molecule by converting glutamine to glutamate. PurL transfers the ammonia molecule to FGAR to form FGAM in an ATP-dependent manner. PurS interacts with PurQ and PurL and is thought to assist in the transfer of the ammonia molecule from PurQ to PurL. The polypeptide is Phosphoribosylformylglycinamidine synthase subunit PurQ (Thermotoga maritima (strain ATCC 43589 / DSM 3109 / JCM 10099 / NBRC 100826 / MSB8)).